A 154-amino-acid polypeptide reads, in one-letter code: Transcriptional repressor NrdR (154 aa).

The segment at 3-34 (CPFCGHAATQVIDTRMSEEGDTVRRRRRCESC) is a zinc-finger region. Residues 49–139 (PAVVKKNGSR…VYRSFEDLAE (91 aa)) enclose the ATP-cone domain.

Belongs to the NrdR family. The cofactor is Zn(2+).

Functionally, negatively regulates transcription of bacterial ribonucleotide reductase nrd genes and operons by binding to NrdR-boxes. In Ralstonia pickettii (strain 12J), this protein is Transcriptional repressor NrdR.